Reading from the N-terminus, the 224-residue chain is Urease accessory protein UreF (224 aa).

The protein belongs to the UreF family. As to quaternary structure, ureD, UreF and UreG form a complex that acts as a GTP-hydrolysis-dependent molecular chaperone, activating the urease apoprotein by helping to assemble the nickel containing metallocenter of UreC. The UreE protein probably delivers the nickel.

The protein resides in the cytoplasm. In terms of biological role, required for maturation of urease via the functional incorporation of the urease nickel metallocenter. The chain is Urease accessory protein UreF from Nitrosococcus oceani (strain ATCC 19707 / BCRC 17464 / JCM 30415 / NCIMB 11848 / C-107).